The following is a 613-amino-acid chain: Dihydroxy-acid dehydratase (613 aa).

Position 81 (aspartate 81) interacts with Mg(2+). Cysteine 122 is a [2Fe-2S] cluster binding site. Mg(2+) contacts are provided by aspartate 123 and lysine 124. N6-carboxylysine is present on lysine 124. A [2Fe-2S] cluster-binding site is contributed by cysteine 195. Glutamate 491 serves as a coordination point for Mg(2+). Serine 517 functions as the Proton acceptor in the catalytic mechanism.

This sequence belongs to the IlvD/Edd family. As to quaternary structure, homodimer. [2Fe-2S] cluster is required as a cofactor. Mg(2+) serves as cofactor.

It carries out the reaction (2R)-2,3-dihydroxy-3-methylbutanoate = 3-methyl-2-oxobutanoate + H2O. It catalyses the reaction (2R,3R)-2,3-dihydroxy-3-methylpentanoate = (S)-3-methyl-2-oxopentanoate + H2O. Its pathway is amino-acid biosynthesis; L-isoleucine biosynthesis; L-isoleucine from 2-oxobutanoate: step 3/4. The protein operates within amino-acid biosynthesis; L-valine biosynthesis; L-valine from pyruvate: step 3/4. Its function is as follows. Functions in the biosynthesis of branched-chain amino acids. Catalyzes the dehydration of (2R,3R)-2,3-dihydroxy-3-methylpentanoate (2,3-dihydroxy-3-methylvalerate) into 2-oxo-3-methylpentanoate (2-oxo-3-methylvalerate) and of (2R)-2,3-dihydroxy-3-methylbutanoate (2,3-dihydroxyisovalerate) into 2-oxo-3-methylbutanoate (2-oxoisovalerate), the penultimate precursor to L-isoleucine and L-valine, respectively. This chain is Dihydroxy-acid dehydratase, found in Vibrio vulnificus (strain YJ016).